The chain runs to 565 residues: Liver carboxylesterase 1 (565 aa).

A signal peptide spans 1–18; it reads MWLCALSLISLTACLSLG. Residues Cys87 and Cys116 are joined by a disulfide bond. Catalysis depends on Ser221, which acts as the Acyl-ester intermediate. A disulfide bond links Cys273 and Cys284. The active-site Charge relay system is the Glu353. At Ser378 the chain carries Phosphoserine. N-linked (GlcNAc...) asparagine glycosylation is present at Asn388. The active-site Charge relay system is His466. A glycan (N-linked (GlcNAc...) asparagine) is linked at Asn489.

The protein belongs to the type-B carboxylesterase/lipase family. In terms of assembly, homotrimer and homohexamer. Binds to beta-glucuronidase. Detected in kidney, liver and lung.

It localises to the endoplasmic reticulum lumen. Its subcellular location is the cytoplasm. The protein resides in the lipid droplet. It catalyses the reaction a carboxylic ester + H2O = an alcohol + a carboxylate + H(+). It carries out the reaction cholesteryl (9Z-octadecenoate) + H2O = cholesterol + (9Z)-octadecenoate + H(+). The catalysed reaction is 2-(5Z,8Z,11Z,14Z-eicosatetraenoyl)-glycerol + H2O = glycerol + (5Z,8Z,11Z,14Z)-eicosatetraenoate + H(+). The enzyme catalyses prostaglandin E2 1-glyceryl ester + H2O = prostaglandin E2 + glycerol + H(+). It catalyses the reaction a cholesterol ester + H2O = cholesterol + a fatty acid + H(+). It carries out the reaction prostaglandin F2alpha 1-glyceryl ester + H2O = prostaglandin F2alpha + glycerol + H(+). Functionally, involved in the detoxification of xenobiotics and in the activation of ester and amide prodrugs. Hydrolyzes aromatic and aliphatic esters, but has no catalytic activity toward amides or a fatty acyl-CoA ester. Displays fatty acid ethyl ester synthase activity, catalyzing the ethyl esterification of oleic acid to ethyloleate. Converts monoacylglycerides to free fatty acids and glycerol. Hydrolyzes of 2-arachidonoylglycerol and prostaglandins. Hydrolyzes cellular cholesteryl esters to free cholesterols and promotes reverse cholesterol transport (RCT) by facilitating both the initial and final steps in the process. First of all, allows free cholesterol efflux from macrophages to extracellular cholesterol acceptors and secondly, releases free cholesterol from lipoprotein-delivered cholesteryl esters in the liver for bile acid synthesis or direct secretion into the bile. In Mus musculus (Mouse), this protein is Liver carboxylesterase 1.